Reading from the N-terminus, the 592-residue chain is 2-succinyl-5-enolpyruvyl-6-hydroxy-3-cyclohexene-1-carboxylate synthase (592 aa).

It belongs to the TPP enzyme family. MenD subfamily. Homodimer. It depends on Mg(2+) as a cofactor. Mn(2+) is required as a cofactor. Requires thiamine diphosphate as cofactor.

The catalysed reaction is isochorismate + 2-oxoglutarate + H(+) = 5-enolpyruvoyl-6-hydroxy-2-succinyl-cyclohex-3-ene-1-carboxylate + CO2. Its pathway is quinol/quinone metabolism; 1,4-dihydroxy-2-naphthoate biosynthesis; 1,4-dihydroxy-2-naphthoate from chorismate: step 2/7. It functions in the pathway quinol/quinone metabolism; menaquinone biosynthesis. Catalyzes the thiamine diphosphate-dependent decarboxylation of 2-oxoglutarate and the subsequent addition of the resulting succinic semialdehyde-thiamine pyrophosphate anion to isochorismate to yield 2-succinyl-5-enolpyruvyl-6-hydroxy-3-cyclohexene-1-carboxylate (SEPHCHC). The protein is 2-succinyl-5-enolpyruvyl-6-hydroxy-3-cyclohexene-1-carboxylate synthase of Haloarcula marismortui (strain ATCC 43049 / DSM 3752 / JCM 8966 / VKM B-1809) (Halobacterium marismortui).